The following is a 245-amino-acid chain: uncharacterized protein (245 aa).

The first 18 residues, 1-18 (MKSAAILALLAQALAVTA), serve as a signal peptide directing secretion. The segment at 21 to 66 (VEGDRTPGTRTLDLPNFPGGSVPTRGVEKRADLPPDNGGGNAPDPD) is disordered. Residues asparagine 189 and asparagine 225 are each glycosylated (N-linked (GlcNAc...) asparagine).

It is found in the secreted. This is an uncharacterized protein from Arthroderma benhamiae (strain ATCC MYA-4681 / CBS 112371) (Trichophyton mentagrophytes).